The chain runs to 383 residues: MRKIQRITQFSDDNNRSQREHIPLDLIVEIVSSLPAKSIVRFRSVSKLWSSIITTPDFTSSVVTRSLSSRPCVLLIFQKHDKLFFFASPVHQKKTCPNVENFQYTIPNNGKLQRCESVHGLIYLETSTNVMFIRNPITKSFFTLPKLDSKEGRPLTGFLGYDPINGKYKVLCILKERNKIGILTLGAQESWRILSKGFLSHYKVTGYAKCIDGVIYYEGSFGDGLRQELAIMSFDLRSEKFSLIKHPKKSSIATCWSSYEGRLALVSSIASGVSLWILEDADNHKQWIYKHFPSHREFIKERWKLKGVTRTGEFIYTSYRAYVLNVEGRVLYQWFRILYVDPKRNSMRVVMHGGIAVDDIRRLDEVGYDLMKDLTVIPNHIQI.

The F-box domain maps to 16–67 (RSQREHIPLDLIVEIVSSLPAKSIVRFRSVSKLWSSIITTPDFTSSVVTRSL).

The polypeptide is Putative F-box protein At4g09190 (Arabidopsis thaliana (Mouse-ear cress)).